Consider the following 432-residue polypeptide: 3-phosphoshikimate 1-carboxyvinyltransferase (432 aa).

3-phosphoshikimate is bound by residues Lys23, Ser24, and Arg28. A phosphoenolpyruvate-binding site is contributed by Lys23. Phosphoenolpyruvate is bound by residues Gly95 and Arg123. Ser167, Gln169, Asp317, and Lys344 together coordinate 3-phosphoshikimate. Residue Gln169 coordinates phosphoenolpyruvate. The active-site Proton acceptor is the Asp317. Positions 348 and 390 each coordinate phosphoenolpyruvate.

It belongs to the EPSP synthase family. In terms of assembly, monomer.

Its subcellular location is the cytoplasm. The catalysed reaction is 3-phosphoshikimate + phosphoenolpyruvate = 5-O-(1-carboxyvinyl)-3-phosphoshikimate + phosphate. It functions in the pathway metabolic intermediate biosynthesis; chorismate biosynthesis; chorismate from D-erythrose 4-phosphate and phosphoenolpyruvate: step 6/7. Catalyzes the transfer of the enolpyruvyl moiety of phosphoenolpyruvate (PEP) to the 5-hydroxyl of shikimate-3-phosphate (S3P) to produce enolpyruvyl shikimate-3-phosphate and inorganic phosphate. This Staphylococcus aureus (strain N315) protein is 3-phosphoshikimate 1-carboxyvinyltransferase.